The primary structure comprises 496 residues: DEAD-box ATP-dependent RNA helicase 38 (496 aa).

Residues 1 to 91 (MADTVEKVPT…SGDTPYTSAS (91 aa)) form a disordered region. Ala-2 bears the N-acetylalanine mark. Over residues 7–25 (KVPTVVESSSSSTVEASNS) the composition is skewed to low complexity. Basic and acidic residues predominate over residues 27-40 (EKTEPTTEKKKWGD). A compositionally biased stretch (acidic residues) spans 41–51 (VEDDDDEEEAV). The span at 78–91 (KAVTSGDTPYTSAS) shows a compositional bias: polar residues. The short motif at 91-120 (SRFEDLNLSPELMKGLYVEMKFEKPSKIQA) is the Q motif element. The region spanning 125–301 (MIMTPPHKHL…ARTVKDPNQL (177 aa)) is the Helicase ATP-binding domain. Position 138 to 145 (138 to 145 (AHNGSGKT)) interacts with ATP. The DEAD box signature appears at 245 to 248 (DEAD). The Helicase C-terminal domain maps to 329–483 (VIKDQIMELG…EIKSWNSEEE (155 aa)).

Belongs to the DEAD box helicase family. DDX19/DBP5 subfamily. Interacts with NUP214 (via N-terminus). In terms of tissue distribution, constitutively expressed.

The protein resides in the cytoplasm. It is found in the nucleus. It catalyses the reaction ATP + H2O = ADP + phosphate + H(+). Its function is as follows. ATP-dependent RNA helicase essential for mRNA export from the nucleus. Plays an important role in the positive regulation of CBF/DREB transcription factors. The chain is DEAD-box ATP-dependent RNA helicase 38 (RH38) from Arabidopsis thaliana (Mouse-ear cress).